The chain runs to 285 residues: MLVEALPYIRKFEGKTFVIKYGGAAMKDEVLKNIFAENVTLLRKVGIKVVIVHGGGDAITKTSAKLGLETTFVHGKRVTDRQTVDVIQMTLAGKVNQDIVQLINKDGGNAVGVSGLDADTILAKPSPNASTLGLVGEVAEINTRYIDLLCDAGLIPVIAPIGYDMEGNIYNINADDAAAAIAVALKAEKLIYVSDVEGVRVGNRILKTICKADAAELIEKGIITGGMIPKVVSAYQTLDGGVGKVHLIDGQITHSLLLEVFTNEGVGTQFVNELEQEPTAEEGAS.

Residues 55–56 (GG), Arg-77, and Asn-171 contribute to the substrate site.

This sequence belongs to the acetylglutamate kinase family. ArgB subfamily.

It is found in the cytoplasm. The catalysed reaction is N-acetyl-L-glutamate + ATP = N-acetyl-L-glutamyl 5-phosphate + ADP. The protein operates within amino-acid biosynthesis; L-arginine biosynthesis; N(2)-acetyl-L-ornithine from L-glutamate: step 2/4. Catalyzes the ATP-dependent phosphorylation of N-acetyl-L-glutamate. The protein is Acetylglutamate kinase of Chlorobaculum tepidum (strain ATCC 49652 / DSM 12025 / NBRC 103806 / TLS) (Chlorobium tepidum).